Here is a 195-residue protein sequence, read N- to C-terminus: Molybdenum cofactor guanylyltransferase (195 aa).

GTP-binding positions include 12–14, Lys25, Asn53, Asp70, and Asp100; that span reads LAG. A Mg(2+)-binding site is contributed by Asp100.

Belongs to the MobA family. As to quaternary structure, monomer. Mg(2+) serves as cofactor.

The protein resides in the cytoplasm. It carries out the reaction Mo-molybdopterin + GTP + H(+) = Mo-molybdopterin guanine dinucleotide + diphosphate. In terms of biological role, transfers a GMP moiety from GTP to Mo-molybdopterin (Mo-MPT) cofactor (Moco or molybdenum cofactor) to form Mo-molybdopterin guanine dinucleotide (Mo-MGD) cofactor. The chain is Molybdenum cofactor guanylyltransferase from Vibrio vulnificus (strain YJ016).